We begin with the raw amino-acid sequence, 89 residues long: HssA/B-like protein 10 (89 aa).

The protein belongs to the hssA/B family.

The protein is HssA/B-like protein 10 (hssl10) of Dictyostelium discoideum (Social amoeba).